The sequence spans 95 residues: uncharacterized protein (95 aa).

A helical membrane pass occupies residues 3-23 (FVIIIAILLLGISLILAFTVL).

It localises to the membrane. This is an uncharacterized protein from Methanocaldococcus jannaschii (strain ATCC 43067 / DSM 2661 / JAL-1 / JCM 10045 / NBRC 100440) (Methanococcus jannaschii).